Consider the following 62-residue polypeptide: Small ribosomal subunit protein uS14 (62 aa).

Zn(2+)-binding residues include cysteine 25, cysteine 28, cysteine 41, and cysteine 44.

The protein belongs to the universal ribosomal protein uS14 family. Zinc-binding uS14 subfamily. In terms of assembly, part of the 30S ribosomal subunit. Contacts proteins S3 and S10. Zn(2+) is required as a cofactor.

Functionally, binds 16S rRNA, required for the assembly of 30S particles and may also be responsible for determining the conformation of the 16S rRNA at the A site. This Hydrogenobaculum sp. (strain Y04AAS1) protein is Small ribosomal subunit protein uS14.